Reading from the N-terminus, the 193-residue chain is Ribonuclease HII (193 aa).

Residues 15–193 (CIVAGIDEAG…PYHRRSFRCC (179 aa)) enclose the RNase H type-2 domain. A divalent metal cation-binding residues include D21, E22, and D112.

This sequence belongs to the RNase HII family. Mn(2+) serves as cofactor. It depends on Mg(2+) as a cofactor.

It is found in the cytoplasm. The catalysed reaction is Endonucleolytic cleavage to 5'-phosphomonoester.. Its function is as follows. Endonuclease that specifically degrades the RNA of RNA-DNA hybrids. This is Ribonuclease HII from Rickettsia africae (strain ESF-5).